A 317-amino-acid polypeptide reads, in one-letter code: Pectinesterase 31 (317 aa).

Substrate-binding residues include threonine 91 and glutamine 121. Residue aspartate 144 is the Proton donor of the active site. The active-site Nucleophile is aspartate 165. Substrate is bound by residues arginine 222 and tryptophan 224.

This sequence belongs to the pectinesterase family. As to expression, expressed in siliques.

The enzyme catalyses [(1-&gt;4)-alpha-D-galacturonosyl methyl ester](n) + n H2O = [(1-&gt;4)-alpha-D-galacturonosyl](n) + n methanol + n H(+). The protein operates within glycan metabolism; pectin degradation; 2-dehydro-3-deoxy-D-gluconate from pectin: step 1/5. Does not require salt for activity. Not inhibited by kiwi pectin methylesterase inhibitor (PMEI). Functionally, acts in the modification of cell walls via demethylesterification of cell wall pectin. Acts in a blockwise manner, resulting in a cell wall rigidification. The polypeptide is Pectinesterase 31 (PME31) (Arabidopsis thaliana (Mouse-ear cress)).